Reading from the N-terminus, the 375-residue chain is Protein HrmA (375 aa).

Its function is as follows. Unknown. May serve a regulatory function. This chain is Protein HrmA (hrmA), found in Pseudomonas syringae pv. syringae.